The chain runs to 967 residues: Phosphoenolpyruvate carboxylase 2 (967 aa).

Phosphoserine is present on serine 13. Catalysis depends on residues histidine 174 and lysine 602.

It belongs to the PEPCase type 1 family. In terms of assembly, homotetramer. Mg(2+) is required as a cofactor.

Its subcellular location is the cytoplasm. It carries out the reaction oxaloacetate + phosphate = phosphoenolpyruvate + hydrogencarbonate. It participates in photosynthesis; C3 acid pathway. By light-reversible phosphorylation. Its function is as follows. Through the carboxylation of phosphoenolpyruvate (PEP) it forms oxaloacetate, a four-carbon dicarboxylic acid source for the tricarboxylic acid cycle. The sequence is that of Phosphoenolpyruvate carboxylase 2 (PEP4) from Zea mays (Maize).